The primary structure comprises 238 residues: Uridylate kinase (238 aa).

Position 12–15 (12–15 (KLSG)) interacts with ATP. Position 54 (Gly-54) interacts with UMP. ATP contacts are provided by Gly-55 and Arg-59. UMP contacts are provided by residues Asp-74 and 135-142 (TGNPYFST). ATP-binding residues include Tyr-168 and Asp-171.

The protein belongs to the UMP kinase family. In terms of assembly, homohexamer.

It is found in the cytoplasm. It carries out the reaction UMP + ATP = UDP + ADP. The protein operates within pyrimidine metabolism; CTP biosynthesis via de novo pathway; UDP from UMP (UMPK route): step 1/1. With respect to regulation, inhibited by UTP. Functionally, catalyzes the reversible phosphorylation of UMP to UDP. The chain is Uridylate kinase from Syntrophomonas wolfei subsp. wolfei (strain DSM 2245B / Goettingen).